A 564-amino-acid chain; its full sequence is Chaperonin GroEL 2 (564 aa).

Residues T29–P32, D86–T90, G413, and D493 each bind ATP. Positions D521–G541 are disordered. Gly residues predominate over residues G530–G541.

It belongs to the chaperonin (HSP60) family. Forms a cylinder of 14 subunits composed of two heptameric rings stacked back-to-back. Interacts with the co-chaperonin GroES.

The protein resides in the cytoplasm. The catalysed reaction is ATP + H2O + a folded polypeptide = ADP + phosphate + an unfolded polypeptide.. Together with its co-chaperonin GroES, plays an essential role in assisting protein folding. The GroEL-GroES system forms a nano-cage that allows encapsulation of the non-native substrate proteins and provides a physical environment optimized to promote and accelerate protein folding. The polypeptide is Chaperonin GroEL 2 (Prochlorococcus marinus (strain MIT 9303)).